The sequence spans 433 residues: Mitochondrial inner membrane magnesium transporter MIT1 (433 aa).

Residues 257-298 (TNKLLRDMMKIKNNLQKLSNLLNALRTNIEKILNNENDMKNM) adopt a coiled-coil conformation. A helical membrane pass occupies residues 360–380 (FILLNAKISFSTLLFSISSVV). Residues 381-396 (TSLFGMNLKNFVEDSN) lie on the Extracellular side of the membrane. Residues 397–417 (YAFIIVSIFVSVWSIIGIYVT) traverse the membrane as a helical segment. The Mitochondrial matrix segment spans residues 418 to 433 (KNINTLLKFFDRYNFR).

This sequence belongs to the CorA metal ion transporter (MIT) (TC 1.A.35) family.

The protein localises to the mitochondrion inner membrane. In terms of biological role, mitochondrial inner membrane magnesium transporter required for mitochondrial magnesium homeostasis. Involved in the development of the sporozoite in the mosquito vector midgut. This chain is Mitochondrial inner membrane magnesium transporter MIT1, found in Plasmodium berghei (strain Anka).